Consider the following 286-residue polypeptide: Cbb3-type cytochrome c oxidase subunit CcoP (286 aa).

Helical transmembrane passes span 11–31 (FGLI…SSLI) and 62–82 (VGWI…FFFG). Cytochrome c domains are found at residues 116–195 (ELVD…MAEL) and 205–286 (QLID…LSNR). The heme c site is built by C129, C132, H133, M174, C219, C222, H223, and M264.

This sequence belongs to the CcoP / FixP family. In terms of assembly, component of the cbb3-type cytochrome c oxidase at least composed of CcoN, CcoO, CcoQ and CcoP. Heme c serves as cofactor.

The protein resides in the cell inner membrane. The protein operates within energy metabolism; oxidative phosphorylation. In terms of biological role, C-type cytochrome. Part of the cbb3-type cytochrome c oxidase complex. CcoP subunit is required for transferring electrons from donor cytochrome c via its heme groups to CcoO subunit. From there, electrons are shuttled to the catalytic binuclear center of CcoN subunit where oxygen reduction takes place. The complex also functions as a proton pump. The protein is Cbb3-type cytochrome c oxidase subunit CcoP of Helicobacter pylori (strain ATCC 700392 / 26695) (Campylobacter pylori).